The primary structure comprises 319 residues: MKTRIVSSVTTTLLLGSILMNPVANAADSDINIKTGTTDIGSNTTVKTGDLVTYDKENGMHKKVFYSFIDDKNHNKKLLVIRTKGTIAGQYRVYSEEGANKSGLAWPSAFKVQLQLPDNEVAQISDYYPRNSIDTKEYMSTLTYGFNGNVTGDDTGKIGGLIGANVSIGHTLKYVQPDFKTILESPTDKKVGWKVIFNNMVNQNWGPYDRDSWNPVYGNQLFMKTRNGSMKAADNFLDPNKASSLLSSGFSPDFATVITMDRKASKQQTNIDVIYERVRDDYQLHWTSTNWKGTNTKDKWIDRSSERYKIDWEKEEMTN.

Positions 1-26 are cleaved as a signal peptide; that stretch reads MKTRIVSSVTTTLLLGSILMNPVANA.

This sequence belongs to the aerolysin family. In terms of assembly, self-assembles to form first a non-lytic oligomeric intermediate and then, a mushroom-shaped homoheptamer structure of 100 Angstroms in length and up to 100 Angstroms in diameter.

It localises to the secreted. Its function is as follows. Alpha-toxin binds to the membrane of eukaryotic cells resulting in the release of low-molecular weight molecules and leading to an eventual osmotic lysis. Inhibits host neutrophil chemotaxis to the lesion region. Heptamer oligomerization and pore formation is required for lytic activity. The sequence is that of Alpha-hemolysin (hly) from Staphylococcus aureus (strain NCTC 8325 / PS 47).